A 217-amino-acid chain; its full sequence is uncharacterized protein (217 aa).

One can recognise an ABC transporter domain in the interval 2 to 216 (LCVKNVSLRL…AQWSENYNKL (215 aa)). Residue 34-41 (GPSGCGKS) participates in ATP binding.

It belongs to the ABC transporter superfamily.

Its function is as follows. Probably part of a binding-protein-dependent transport system YnjCD. Probably responsible for energy coupling to the transport system. This is an uncharacterized protein from Escherichia coli (strain K12).